We begin with the raw amino-acid sequence, 287 residues long: NAD-dependent protein deacylase sir-2.2 (287 aa).

Positions 10-287 constitute a Deacetylase sirtuin-type domain; that stretch reads AELCENSLKK…YKISDVLKEM (278 aa). NAD(+) is bound by residues 35–55 and 116–119; these read GAGI…VGLY and QNVD. The Proton acceptor role is filled by His134. Cys142, Cys145, Cys196, and Cys199 together coordinate Zn(2+). NAD(+)-binding positions include 236–238, 262–264, and Ile280; these read GTS and NIG.

Belongs to the sirtuin family. Class II subfamily. Interacts with pyc-1, pcca-1 and mccc-1. Requires Zn(2+) as cofactor. As to expression, ubiquitously expressed with high expression in the pharynx, body wall muscles and gonad.

It localises to the mitochondrion matrix. Its subcellular location is the mitochondrion. It carries out the reaction N(6)-acetyl-L-lysyl-[protein] + NAD(+) + H2O = 2''-O-acetyl-ADP-D-ribose + nicotinamide + L-lysyl-[protein]. NAD-dependent protein deacylase. Catalyzes the NAD-dependent hydrolysis of acyl groups from lysine residues. Plays a role in oxidative stress resistance. The protein is NAD-dependent protein deacylase sir-2.2 (sir-2.2) of Caenorhabditis elegans.